Consider the following 180-residue polypeptide: Cuticle protein 3 (180 aa).

Positions 1–16 (MMKLIVLAAFIGVCAG) are cleaved as a signal peptide. A Chitin-binding type R&amp;R domain is found at 58-121 (EQGFRYAYET…PQGAHFPTPP (64 aa)).

The sequence is that of Cuticle protein 3 from Lonomia obliqua (Moth).